Consider the following 194-residue polypeptide: MSNIKLIVGLANPGAQYERTRHNAGAWYVEELARVCGATLTLDSKYFGMTARVTLHGKDVRLLIPTTFMNLSGKSVGALANFFRIAPEEILVAHDELDMPPGVAKFKLGGGHGGHNGLKDIIAKLANDKGFYRLRIGIGHPGDKSQVSNYVLSKASPTDQELMDAAVDEAVRSTEVLFNQDMAKAMHRLHSFKA.

Tyr17 is a tRNA binding site. The Proton acceptor role is filled by His22. TRNA-binding residues include Phe68, Asn70, and Asn116.

It belongs to the PTH family. As to quaternary structure, monomer.

The protein resides in the cytoplasm. It catalyses the reaction an N-acyl-L-alpha-aminoacyl-tRNA + H2O = an N-acyl-L-amino acid + a tRNA + H(+). Hydrolyzes ribosome-free peptidyl-tRNAs (with 1 or more amino acids incorporated), which drop off the ribosome during protein synthesis, or as a result of ribosome stalling. Functionally, catalyzes the release of premature peptidyl moieties from peptidyl-tRNA molecules trapped in stalled 50S ribosomal subunits, and thus maintains levels of free tRNAs and 50S ribosomes. In Shewanella halifaxensis (strain HAW-EB4), this protein is Peptidyl-tRNA hydrolase.